Here is a 154-residue protein sequence, read N- to C-terminus: Large ribosomal subunit protein uL15 (154 aa).

The segment covering 1 to 13 (MKLHELKPAEGSR) has biased composition (basic and acidic residues). Residues 1-52 (MKLHELKPAEGSRKNRKRVGRGPGGTDKTAGRGHKGQKSRSGAGKGSFFEGG) are disordered.

The protein belongs to the universal ribosomal protein uL15 family. In terms of assembly, part of the 50S ribosomal subunit.

In terms of biological role, binds to the 23S rRNA. In Deinococcus deserti (strain DSM 17065 / CIP 109153 / LMG 22923 / VCD115), this protein is Large ribosomal subunit protein uL15.